Reading from the N-terminus, the 206-residue chain is dITP/XTP pyrophosphatase (206 aa).

10-15 (SGNAGK) contributes to the substrate binding site. 2 residues coordinate Mg(2+): Glu-40 and Asp-69. Asp-69 functions as the Proton acceptor in the catalytic mechanism. Substrate-binding positions include Ser-70, 148–151 (FGYD), Lys-171, and 176–177 (HR).

It belongs to the HAM1 NTPase family. As to quaternary structure, homodimer. It depends on Mg(2+) as a cofactor.

It catalyses the reaction XTP + H2O = XMP + diphosphate + H(+). The enzyme catalyses dITP + H2O = dIMP + diphosphate + H(+). The catalysed reaction is ITP + H2O = IMP + diphosphate + H(+). In terms of biological role, pyrophosphatase that catalyzes the hydrolysis of nucleoside triphosphates to their monophosphate derivatives, with a high preference for the non-canonical purine nucleotides XTP (xanthosine triphosphate), dITP (deoxyinosine triphosphate) and ITP. Seems to function as a house-cleaning enzyme that removes non-canonical purine nucleotides from the nucleotide pool, thus preventing their incorporation into DNA/RNA and avoiding chromosomal lesions. The sequence is that of dITP/XTP pyrophosphatase from Synechococcus sp. (strain CC9311).